The primary structure comprises 354 residues: UDP-N-acetylglucosamine--N-acetylmuramyl-(pentapeptide) pyrophosphoryl-undecaprenol N-acetylglucosamine transferase (354 aa).

Residues 15-17 (TGG), Asn127, Arg163, Ser191, Ile242, 261-266 (ALTVSE), and Gln286 contribute to the UDP-N-acetyl-alpha-D-glucosamine site.

The protein belongs to the glycosyltransferase 28 family. MurG subfamily.

It localises to the cell inner membrane. It carries out the reaction di-trans,octa-cis-undecaprenyl diphospho-N-acetyl-alpha-D-muramoyl-L-alanyl-D-glutamyl-meso-2,6-diaminopimeloyl-D-alanyl-D-alanine + UDP-N-acetyl-alpha-D-glucosamine = di-trans,octa-cis-undecaprenyl diphospho-[N-acetyl-alpha-D-glucosaminyl-(1-&gt;4)]-N-acetyl-alpha-D-muramoyl-L-alanyl-D-glutamyl-meso-2,6-diaminopimeloyl-D-alanyl-D-alanine + UDP + H(+). The protein operates within cell wall biogenesis; peptidoglycan biosynthesis. Cell wall formation. Catalyzes the transfer of a GlcNAc subunit on undecaprenyl-pyrophosphoryl-MurNAc-pentapeptide (lipid intermediate I) to form undecaprenyl-pyrophosphoryl-MurNAc-(pentapeptide)GlcNAc (lipid intermediate II). The sequence is that of UDP-N-acetylglucosamine--N-acetylmuramyl-(pentapeptide) pyrophosphoryl-undecaprenol N-acetylglucosamine transferase from Pasteurella multocida (strain Pm70).